A 93-amino-acid chain; its full sequence is MARDTAILRVTGFVQGVGFRYTTKHVAYKYDISGTVKNLDDGSVEIHAIAEEENLNKFIDAIKKGPSPGCRIEHVYIYKGAPVEERKTFDIVY.

Residues 5–93 enclose the Acylphosphatase-like domain; that stretch reads TAILRVTGFV…EERKTFDIVY (89 aa). Residues arginine 20 and asparagine 38 contribute to the active site.

This sequence belongs to the acylphosphatase family.

It catalyses the reaction an acyl phosphate + H2O = a carboxylate + phosphate + H(+). This chain is Acylphosphatase (acyP), found in Listeria monocytogenes serotype 4b (strain F2365).